The chain runs to 412 residues: Histone-lysine N-methyltransferase SUV39H1 (412 aa).

Residues 1-89 (MAENLKGCSV…LKCIRVLKQF (89 aa)) form an interaction with SIRT1 region. The region spanning 43–101 (FEVEYLCDYKKIREQEYYLVKWRGYPDSENTWEPRQNLKCIRVLKQFHKDLERELVRRH) is the Chromo domain. One can recognise a Pre-SET domain in the interval 179 to 240 (VGCECQDCLL…DCPNRVVQKG (62 aa)). Zn(2+) contacts are provided by C181, C183, C186, C194, C195, C222, C226, C228, and C232. An SET domain is found at 243 to 366 (YDLCIFRTND…AGEELTFDYN (124 aa)). 254–256 (RGW) lines the S-adenosyl-L-methionine pocket. Positions 255–377 (GWGVRTLEKI…QVDPVDMEST (123 aa)) are mediates interaction with MECOM. The residue at position 266 (K266) is an N6-acetyllysine. S-adenosyl-L-methionine is bound by residues Y297 and 323-324 (NH). C326 contacts Zn(2+). The residue at position 391 (S391) is a Phosphoserine. Positions 396–412 (VRIECKCGTTACRKYLF) constitute a Post-SET domain. Zn(2+) is bound by residues C400, C402, and C407.

It belongs to the class V-like SAM-binding methyltransferase superfamily. Histone-lysine methyltransferase family. Suvar3-9 subfamily. As to quaternary structure, interacts with CCAR2 and GFI1B. Component of the eNoSC complex, composed of SIRT1, SUV39H1 and RRP8. Interacts with H3 and H4 histones. Interacts with DNMT3B, CBX1, CBX4, MBD1, RUNX1, RUNX3, MYOD1, SMAD5 and RB1. Interacts with SBF1 through the SET domain. Interacts with HDAC1 and HDAC2 through the N-terminus and associates with the core histone deacetylase complex composed of HDAC1, HDAC2, RBBP4 and RBBP7. Interacts (via SET domain) with MECOM; enhances MECOM transcriptional repression activity. Interacts with LMNA; the interaction increases stability of SUV39H1. The large PER complex involved in the histone methylation is composed of at least PER2, CBX3, TRIM28, SUV39H1 and/or SUV39H2; CBX3 mediates the formation of the complex. Phosphorylated on serine residues, and to a lesser degree, on threonine residues. Post-translationally, acetylated at Lys-266, leading to inhibition of enzyme activity. SIRT1-mediated deacetylation relieves this inhibition. In terms of processing, ubiquitinated by the DCX(DCAF13) E3 ubiquitin ligase complex, leading to its degradation. Widely expressed.

The protein resides in the nucleus. The protein localises to the nucleus lamina. It localises to the nucleoplasm. It is found in the chromosome. Its subcellular location is the centromere. The catalysed reaction is L-lysyl(9)-[histone H3] + 3 S-adenosyl-L-methionine = N(6),N(6),N(6)-trimethyl-L-lysyl(9)-[histone H3] + 3 S-adenosyl-L-homocysteine + 3 H(+). Negatively regulated by CCAR2. Histone methyltransferase that specifically trimethylates 'Lys-9' of histone H3 using monomethylated H3 'Lys-9' as substrate. H3 'Lys-9' trimethylation represents a specific tag for epigenetic transcriptional repression by recruiting HP1 (CBX1, CBX3 and/or CBX5) proteins to methylated histones. Mainly functions in heterochromatin regions, thereby playing a central role in the establishment of constitutive heterochromatin at pericentric and telomere regions. H3 'Lys-9' trimethylation is also required to direct DNA methylation at pericentric repeats. SUV39H1 is targeted to histone H3 via its interaction with RB1 and is involved in many processes, such as repression of MYOD1-stimulated differentiation, regulation of the control switch for exiting the cell cycle and entering differentiation, repression by the PML-RARA fusion protein, BMP-induced repression, repression of switch recombination to IgA and regulation of telomere length. Component of the eNoSC (energy-dependent nucleolar silencing) complex, a complex that mediates silencing of rDNA in response to intracellular energy status and acts by recruiting histone-modifying enzymes. The eNoSC complex is able to sense the energy status of cell: upon glucose starvation, elevation of NAD(+)/NADP(+) ratio activates SIRT1, leading to histone H3 deacetylation followed by dimethylation of H3 at 'Lys-9' (H3K9me2) by SUV39H1 and the formation of silent chromatin in the rDNA locus. Recruited by the PER complex to the E-box elements of the circadian target genes such as PER2 itself or PER1, contributes to the conversion of local chromatin to a heterochromatin-like repressive state through H3 'Lys-9' trimethylation. The sequence is that of Histone-lysine N-methyltransferase SUV39H1 (Suv39h1) from Mus musculus (Mouse).